The chain runs to 283 residues: Glutamate racemase (283 aa).

Residues 28-29 (DS) and 60-61 (YG) contribute to the substrate site. The Proton donor/acceptor role is filled by Cys-92. 93-94 (NT) is a substrate binding site. Cys-204 functions as the Proton donor/acceptor in the catalytic mechanism. Position 205-206 (205-206 (TH)) interacts with substrate.

It belongs to the aspartate/glutamate racemases family.

The enzyme catalyses L-glutamate = D-glutamate. The protein operates within cell wall biogenesis; peptidoglycan biosynthesis. Provides the (R)-glutamate required for cell wall biosynthesis. In Salmonella gallinarum (strain 287/91 / NCTC 13346), this protein is Glutamate racemase.